Here is a 577-residue protein sequence, read N- to C-terminus: Proline--tRNA ligase (577 aa).

This sequence belongs to the class-II aminoacyl-tRNA synthetase family. ProS type 1 subfamily. In terms of assembly, homodimer.

Its subcellular location is the cytoplasm. The enzyme catalyses tRNA(Pro) + L-proline + ATP = L-prolyl-tRNA(Pro) + AMP + diphosphate. In terms of biological role, catalyzes the attachment of proline to tRNA(Pro) in a two-step reaction: proline is first activated by ATP to form Pro-AMP and then transferred to the acceptor end of tRNA(Pro). As ProRS can inadvertently accommodate and process non-cognate amino acids such as alanine and cysteine, to avoid such errors it has two additional distinct editing activities against alanine. One activity is designated as 'pretransfer' editing and involves the tRNA(Pro)-independent hydrolysis of activated Ala-AMP. The other activity is designated 'posttransfer' editing and involves deacylation of mischarged Ala-tRNA(Pro). The misacylated Cys-tRNA(Pro) is not edited by ProRS. The polypeptide is Proline--tRNA ligase (Thermotoga sp. (strain RQ2)).